A 313-amino-acid polypeptide reads, in one-letter code: Homoserine O-succinyltransferase (313 aa).

Cysteine 142 (acyl-thioester intermediate) is an active-site residue. Substrate contacts are provided by lysine 163 and serine 192. Catalysis depends on histidine 235, which acts as the Proton acceptor. The active site involves glutamate 237. Arginine 249 lines the substrate pocket.

Belongs to the MetA family.

The protein resides in the cytoplasm. The enzyme catalyses L-homoserine + succinyl-CoA = O-succinyl-L-homoserine + CoA. It functions in the pathway amino-acid biosynthesis; L-methionine biosynthesis via de novo pathway; O-succinyl-L-homoserine from L-homoserine: step 1/1. Transfers a succinyl group from succinyl-CoA to L-homoserine, forming succinyl-L-homoserine. This chain is Homoserine O-succinyltransferase, found in Aliivibrio fischeri (strain MJ11) (Vibrio fischeri).